Here is a 489-residue protein sequence, read N- to C-terminus: Glutamate--tRNA ligase (489 aa).

A 'HIGH' region motif is present at residues 11-21 (PSPTGHLHIGN). The 'KMSKS' region motif lies at 252-256 (KLSKR). Lys255 serves as a coordination point for ATP.

The protein belongs to the class-I aminoacyl-tRNA synthetase family. Glutamate--tRNA ligase type 1 subfamily. As to quaternary structure, monomer.

The protein localises to the cytoplasm. It catalyses the reaction tRNA(Glu) + L-glutamate + ATP = L-glutamyl-tRNA(Glu) + AMP + diphosphate. Functionally, catalyzes the attachment of glutamate to tRNA(Glu) in a two-step reaction: glutamate is first activated by ATP to form Glu-AMP and then transferred to the acceptor end of tRNA(Glu). The sequence is that of Glutamate--tRNA ligase from Oceanobacillus iheyensis (strain DSM 14371 / CIP 107618 / JCM 11309 / KCTC 3954 / HTE831).